A 336-amino-acid polypeptide reads, in one-letter code: Probable deoxyhypusine synthase (336 aa).

The Nucleophile role is filled by K308.

This sequence belongs to the deoxyhypusine synthase family. It depends on NAD(+) as a cofactor.

The enzyme catalyses [eIF5A protein]-L-lysine + spermidine = [eIF5A protein]-deoxyhypusine + propane-1,3-diamine. It participates in protein modification; eIF5A hypusination. Its function is as follows. Catalyzes the NAD-dependent oxidative cleavage of spermidine and the subsequent transfer of the butylamine moiety of spermidine to the epsilon-amino group of a specific lysine residue of the eIF-5A precursor protein to form the intermediate deoxyhypusine residue. The sequence is that of Probable deoxyhypusine synthase from Pyrococcus furiosus (strain ATCC 43587 / DSM 3638 / JCM 8422 / Vc1).